Here is a 251-residue protein sequence, read N- to C-terminus: ATP synthase subunit a (251 aa).

Transmembrane regions (helical) follow at residues Phe-29–Val-49, Leu-56–Ala-73, Phe-87–Ile-107, Ile-117–Met-137, Leu-159–Ala-181, Ile-192–Leu-212, and Val-218–Leu-238.

The protein belongs to the ATPase A chain family. As to quaternary structure, F-type ATPases have 2 components, CF(1) - the catalytic core - and CF(0) - the membrane proton channel. CF(1) has five subunits: alpha(3), beta(3), gamma(1), delta(1), epsilon(1). CF(0) has three main subunits: a(1), b(2) and c(9-12). The alpha and beta chains form an alternating ring which encloses part of the gamma chain. CF(1) is attached to CF(0) by a central stalk formed by the gamma and epsilon chains, while a peripheral stalk is formed by the delta and b chains.

The protein resides in the cell inner membrane. Functionally, key component of the proton channel; it plays a direct role in the translocation of protons across the membrane. This Methylobacterium sp. (strain 4-46) protein is ATP synthase subunit a.